The primary structure comprises 32 residues: Parigidin-br1 (32 aa).

Residues 1–32 constitute a cross-link (cyclopeptide (Gly-Asp)); sequence GGSVPCGESCVFIPCITSLAGCSCKNKVCYYD. Intrachain disulfides connect Cys-6/Cys-22, Cys-10/Cys-24, and Cys-15/Cys-29.

Post-translationally, this is a cyclic peptide. As to expression, expressed in leaves, flowers, peduncles and seeds (at protein level).

Functionally, probably participates in a plant defense mechanism. Reduces growth of and increases mortality in larvae of D.saccharalis. Kills cultured SF-9 cells of S.frugiperda probably by disrupting plasma membranes. Has hemolytic activity against human erythrocytes. Has no antibacterial activity against E.coli strain ATCC 8739 and S.aureus strain ATCC 25923. This is Parigidin-br1 from Palicourea rigida.